The following is a 421-amino-acid chain: Serine hydroxymethyltransferase (421 aa).

Residues leucine 121 and 125–127 contribute to the (6S)-5,6,7,8-tetrahydrofolate site; that span reads GHL. An N6-(pyridoxal phosphate)lysine modification is found at lysine 229.

This sequence belongs to the SHMT family. Homodimer. It depends on pyridoxal 5'-phosphate as a cofactor.

The protein localises to the cytoplasm. It carries out the reaction (6R)-5,10-methylene-5,6,7,8-tetrahydrofolate + glycine + H2O = (6S)-5,6,7,8-tetrahydrofolate + L-serine. It participates in one-carbon metabolism; tetrahydrofolate interconversion. The protein operates within amino-acid biosynthesis; glycine biosynthesis; glycine from L-serine: step 1/1. Its function is as follows. Catalyzes the reversible interconversion of serine and glycine with tetrahydrofolate (THF) serving as the one-carbon carrier. This reaction serves as the major source of one-carbon groups required for the biosynthesis of purines, thymidylate, methionine, and other important biomolecules. Also exhibits THF-independent aldolase activity toward beta-hydroxyamino acids, producing glycine and aldehydes, via a retro-aldol mechanism. In Haemophilus influenzae (strain ATCC 51907 / DSM 11121 / KW20 / Rd), this protein is Serine hydroxymethyltransferase.